A 528-amino-acid chain; its full sequence is Aspartic proteinase-like protein 1 (528 aa).

A signal peptide spans 1–22; the sequence is MVSRSAFLLFCVLFLATEETLA. The Peptidase A1 domain maps to 100–449; the sequence is HYTWIDIGTP…DRENMKLGWS (350 aa). Aspartate 118 is an active-site residue. N-linked (GlcNAc...) asparagine glycosylation is found at asparagine 193 and asparagine 217. Aspartate 333 is a catalytic residue. Residues asparagine 358 and asparagine 391 are each glycosylated (N-linked (GlcNAc...) asparagine). The disordered stretch occupies residues 451–503; it reads SKCQEDKIEPPQASPGSTSSPNPLPTDEQQSRGGHAVSPAIAGKTPSKTPSSS. The span at 464-482 shows a compositional bias: polar residues; sequence SPGSTSSPNPLPTDEQQSR. Residues 494–503 show a composition bias toward low complexity; the sequence is KTPSKTPSSS. The GPI-anchor amidated serine moiety is linked to residue serine 503. The propeptide at 504–528 is removed in mature form; it reads SSYSFSSIMRLFNSLLLLHWLASLM.

Belongs to the peptidase A1 family.

Its subcellular location is the cell membrane. The polypeptide is Aspartic proteinase-like protein 1 (Arabidopsis thaliana (Mouse-ear cress)).